The following is a 468-amino-acid chain: Peroxisome proliferator-activated receptor alpha (468 aa).

A DNA-binding region (nuclear receptor) is located at residues 99 to 173; that stretch reads NIECRICGDK…VGMSHNAIRF (75 aa). 2 NR C4-type zinc fingers span residues 102 to 122 and 139 to 161; these read CRICGDKASGYHYGVHACEGC and CDRSCKIQKKNRNKCQYCRFHKC. The NR LBD domain maps to 239–466; it reads FVIHDMETLC…HPLLQEIYRD (228 aa). The required for heterodimerization with RXRA stretch occupies residues 304–433; it reads DQVTLLKYGV…PKLLQKMVDL (130 aa).

This sequence belongs to the nuclear hormone receptor family. NR1 subfamily. As to quaternary structure, heterodimer; with RXRA. This heterodimerization is required for DNA binding and transactivation activity. Interacts with NCOA3 coactivator. Interacts with CITED2; the interaction stimulates its transcriptional activity. Also interacts with PPARBP in vitro. Interacts with AKAP13, LPIN1, PRDM16 and coactivator NCOA6. Interacts with ASXL1 and ASXL2. Interacts with PER2. Interacts with SIRT1; the interaction seems to be modulated by NAD(+) levels. Interacts with CRY1 and CRY2. In hepatocytes, interacts with PAQR3 and HUWE1; the interactions promote PPARA poylubiquitination and HUWE1-mediated degradation. Phosphorylated. Post-translationally, ubiquitinated by E3 ubiquitin-protein ligase HUWE1; leading to proteasomal degradation. As to expression, expressed predominantly in liver and kidney.

Its subcellular location is the nucleus. Its function is as follows. Ligand-activated transcription factor. Key regulator of lipid metabolism. Activated by the endogenous ligand 1-palmitoyl-2-oleoyl-sn-glycerol-3-phosphocholine (16:0/18:1-GPC). Activated by oleylethanolamide, a naturally occurring lipid that regulates satiety. Receptor for peroxisome proliferators such as hypolipidemic drugs and fatty acids. Regulates the peroxisomal beta-oxidation pathway of fatty acids. Functions as a transcription activator for the ACOX1 and P450 genes. Transactivation activity requires heterodimerization with RXRA and is antagonized by NR2C2. May be required for the propagation of clock information to metabolic pathways regulated by PER2. This is Peroxisome proliferator-activated receptor alpha (Ppara) from Rattus norvegicus (Rat).